We begin with the raw amino-acid sequence, 725 residues long: MHDHITNTGGKCPVMHGALTTSSMATNMEWWPKALNLDILHQHDHKTNPMGANFNYQDAVKTLDVDALKRDLHALMTDSQDWWPADWGHYGGLMIRMTWHAAGTYRIADGRGGAGTGNQRFAPINSWPDNTNLDKARRLLWPLKKKYGNKLSWADLIAYAGTIAYESMGLKTFGFAFGREDIWHPEKDIYWGSEKEWLAPSDNPHSRYSGERDLENPLAAVMMGLIYVNPEGVDGNPDPLKTAHDIRITFSRMAMNDEETVALTAGGHTVGKCHGNGDATLLGPEPEAADLDDQGLGWLNKTQRGIGRNTVTSGIEGAWTTYPTQWDNGYFRLLLNYDWELKKSPAGAWQWEPINIKEEDKPVDVEDPSIRLSPIMTDADMAMKMDPDYRQISERFYQDPAYFAETFARAWFKLTHRDMGPKSRYIGPDVPQEDLLWQDPIPAGKTDYDPQAVKDKIAASGLSVSEMVCTAWDSARTFRGSDKRGGANGARIRLAPQKDWAGNEPARLAKVLPVLEAIATESGASVADVIVLAGNVGIEQAAQAAGVEITVPFAPGRGDATAEMTDVEGFAVLEPLHDGYRNWLQKDYVVSPEELMLDRTQLMGLTAPEMTVLVGGMRVLGTNYGGTKHGVLTDREGALTNDFFVNLTDMKYTWKPAGKNLYEIGDRHTGEVKWTATRVDLVFGCNSILRAYAEVYAQDDSNEKFIQDFVAAWTKVMNADRFDLA.

A cross-link (tryptophyl-tyrosyl-methioninium (Trp-Tyr) (with M-253)) is located at residues 99–227 (WHAAGTYRIA…LAAVMMGLIY (129 aa)). His100 (proton acceptor) is an active-site residue. The tryptophyl-tyrosyl-methioninium (Tyr-Met) (with W-99) cross-link spans 227 to 253 (YVNPEGVDGNPDPLKTAHDIRITFSRM). His268 serves as a coordination point for heme b.

It belongs to the peroxidase family. Peroxidase/catalase subfamily. Homodimer or homotetramer. The cofactor is heme b. Formation of the three residue Trp-Tyr-Met cross-link is important for the catalase, but not the peroxidase activity of the enzyme.

The catalysed reaction is H2O2 + AH2 = A + 2 H2O. The enzyme catalyses 2 H2O2 = O2 + 2 H2O. In terms of biological role, bifunctional enzyme with both catalase and broad-spectrum peroxidase activity. This Picosynechococcus sp. (strain ATCC 27264 / PCC 7002 / PR-6) (Agmenellum quadruplicatum) protein is Catalase-peroxidase.